The sequence spans 164 residues: MNKEPMSMHGYNKICAELKQLKEVERPNIVKEIDIARGHGDLKENAEYHAAKEKQRFIEARIVDLSEIIANAQVIDPSVLAHNKVSFGSTIKILNLDNDKEFSYTIVGSVESDPSKGLISFGSPIAKSLIGKSKGDAVSIQLPNGESDFEILDIYYKEICFDEN.

This sequence belongs to the GreA/GreB family.

Functionally, necessary for efficient RNA polymerase transcription elongation past template-encoded arresting sites. The arresting sites in DNA have the property of trapping a certain fraction of elongating RNA polymerases that pass through, resulting in locked ternary complexes. Cleavage of the nascent transcript by cleavage factors such as GreA or GreB allows the resumption of elongation from the new 3'terminus. GreA releases sequences of 2 to 3 nucleotides. The protein is Transcription elongation factor GreA of Helicobacter pylori (strain Shi470).